The primary structure comprises 790 residues: MDYVNVVDGSKKTMNSPEGAAPGLIGATGITNPTPDNDLPLQASNKLTRLSQSTSNDSKLIAAGEPKACDLERSRVGGSCKMTTPGHSNFVLKRDSVEGCPAKNSSMAESNGQTNPMHCRIVPLQSAEGDTNQGFGKNSLEQNNAKGDWVPISQSTVVLGTDGNTSVFPGTLTGDEEGDENKARGNWSNKLDFILSMVGYAVGLGNVWRFPYLAFKNGGGAFLIPYLTMLALAGLPIFYLEVALGQFASQGPISVWKAIPALQGCGIAMLIISVLIAIYYNIIMCYTIFYLFASLVYVLPWASCNNPWNTPDCKDKDRLLLDSCIISSQPNIQIKNSTFCMTAYPNLTMVNFTSHGNKSFVSGSEEYFKYNMLKISAGIEYPGEIRWPLVFCLFLAWIIVYASLAKGIKTSGKVVYSTATFPYVVLVILLFRGVTLPGAGDGIWWFIMPKWEKLMDATVWKDAATQIFFSLSAAWGGLITLSSYNKFHNNLYRDTLIVTCINSATSIFAGFVIFSVIGFMAHILNVDIEKVADQGPGIAFVVYPEALTRLPLSPFWAIIFFLMLLTLGLDTMFATIETIVTSVSDEFPKLLRTHKPLFTLVCCVAFFIMGFPMITQGGIYMLQLVDNYAASYSLVIIAIFELVGISYIYGLQRFCEDIEMMIGFQPSRFWKICWAFVTPTILTFILGFSFYQWEPMTYGSYHYPSWSMVMGWLMLACSVIWIPIMFVIKMFLAPGTFIERLKLVCSPQPDWGPFLAKHRGERYKNMIDPLGTSSLGLKLPPKDFELGTQC.

The segment at 1–39 (MDYVNVVDGSKKTMNSPEGAAPGLIGATGITNPTPDNDL) is disordered. At 1-192 (MDYVNVVDGS…ARGNWSNKLD (192 aa)) the chain is on the cytoplasmic side. 3 helical membrane passes run 193–213 (FILS…FPYL), 220–240 (GAFL…IFYL), and 264–284 (GCGI…NIIM). 4 residues coordinate Na(+): glycine 199, alanine 201, valine 202, and asparagine 206. Topologically, residues 285 to 387 (CYTIFYLFAS…GIEYPGEIRW (103 aa)) are extracellular. The cysteines at positions 304 and 313 are disulfide-linked. Residues asparagine 336, asparagine 346, asparagine 351, and asparagine 357 are each glycosylated (N-linked (GlcNAc...) asparagine). The next 3 helical transmembrane spans lie at 388–408 (PLVF…AKGI), 427–447 (VILL…WWFI), and 463–483 (AATQ…TLSS). Na(+)-binding residues include serine 470 and asparagine 502. 6 helical membrane passes run 504–524 (ATSI…AHIL), 556–576 (WAII…FATI), 597–617 (LFTL…ITQG), 631–651 (SYSL…IYGL), 672–692 (ICWA…SFYQ), and 708–728 (MVMG…MFVI). 2 residues coordinate Na(+): leucine 567 and aspartate 570. The Cytoplasmic portion of the chain corresponds to 729–790 (KMFLAPGTFI…PKDFELGTQC (62 aa)).

The protein belongs to the sodium:neurotransmitter symporter (SNF) (TC 2.A.22) family. SLC6A5 subfamily. In terms of tissue distribution, first expressed in late neurula stages in the anterior spinal cord, where expression intensifies through the tailbud stages, and by hatching, expression is seen in the hindbrain. During late hatching stages, expression extends along most of the length of the spinal cord, mildly intensifies in the hindbrain, and appears in localized regions of the lateral forebrain and medial midbrain. By the swimming tadpole stage, weak expression appears in the anterior hindbrain, with stronger expression in the posterior, postmitotic neurons.

It localises to the cell membrane. The catalysed reaction is glycine(out) + chloride(out) + 3 Na(+)(out) = glycine(in) + chloride(in) + 3 Na(+)(in). Sodium- and chloride-dependent glycine transporter. Terminates the action of glycine by its high affinity sodium-dependent reuptake into presynaptic terminals. May be responsible for the termination of neurotransmission at strychnine-sensitive glycinergic synapses. The chain is Sodium- and chloride-dependent glycine transporter 2 from Xenopus laevis (African clawed frog).